Here is a 272-residue protein sequence, read N- to C-terminus: EID1-like F-box protein 3 (272 aa).

In terms of domain architecture, F-box spans 29–81 (SGKSGIENERVLVLVFESISWDIHTLCTIASLSRRFCAIARRILWRRLCVNRA).

This Arabidopsis thaliana (Mouse-ear cress) protein is EID1-like F-box protein 3 (EDL3).